A 238-amino-acid polypeptide reads, in one-letter code: Small ribosomal subunit protein uS3 (238 aa).

In terms of domain architecture, KH type-2 spans 39 to 109; that stretch reads IRTFINQQLA…TIKVNVVEVN (71 aa). Positions 215–238 are disordered; that stretch reads EAVPREATRRSPQRRLPQFENRSN.

The protein belongs to the universal ribosomal protein uS3 family. Part of the 30S ribosomal subunit. Forms a tight complex with proteins S10 and S14.

Binds the lower part of the 30S subunit head. Binds mRNA in the 70S ribosome, positioning it for translation. The sequence is that of Small ribosomal subunit protein uS3 from Thermosynechococcus vestitus (strain NIES-2133 / IAM M-273 / BP-1).